The sequence spans 399 residues: Elongation factor Tu (399 aa).

One can recognise a tr-type G domain in the interval 10 to 209 (KPHVNIGTIG…AVDSYIPTPV (200 aa)). The segment at 19-26 (GHVDHGKT) is G1. Residue 19-26 (GHVDHGKT) coordinates GTP. A Mg(2+)-binding site is contributed by Thr-26. The G2 stretch occupies residues 60–64 (GITIA). Positions 81–84 (DCPG) are G3. GTP-binding positions include 81-85 (DCPGH) and 136-139 (NKAD). The G4 stretch occupies residues 136 to 139 (NKAD). A G5 region spans residues 174-176 (SAL).

This sequence belongs to the TRAFAC class translation factor GTPase superfamily. Classic translation factor GTPase family. EF-Tu/EF-1A subfamily. Monomer.

The protein localises to the cytoplasm. It catalyses the reaction GTP + H2O = GDP + phosphate + H(+). GTP hydrolase that promotes the GTP-dependent binding of aminoacyl-tRNA to the A-site of ribosomes during protein biosynthesis. This is Elongation factor Tu from Campylobacter fetus subsp. fetus (strain 82-40).